The sequence spans 137 residues: 1,4-dihydroxy-2-naphthoyl-CoA hydrolase (137 aa).

The active site involves Asp-13.

Belongs to the 4-hydroxybenzoyl-CoA thioesterase family. DHNA-CoA hydrolase subfamily.

It catalyses the reaction 1,4-dihydroxy-2-naphthoyl-CoA + H2O = 1,4-dihydroxy-2-naphthoate + CoA + H(+). It participates in cofactor biosynthesis; phylloquinone biosynthesis. The protein operates within quinol/quinone metabolism; 1,4-dihydroxy-2-naphthoate biosynthesis; 1,4-dihydroxy-2-naphthoate from chorismate: step 7/7. Catalyzes the hydrolysis of 1,4-dihydroxy-2-naphthoyl-CoA (DHNA-CoA) to 1,4-dihydroxy-2-naphthoate (DHNA), a reaction involved in phylloquinone (vitamin K1) biosynthesis. In Crocosphaera subtropica (strain ATCC 51142 / BH68) (Cyanothece sp. (strain ATCC 51142)), this protein is 1,4-dihydroxy-2-naphthoyl-CoA hydrolase.